The chain runs to 191 residues: Sec-independent protein translocase protein TatB (191 aa).

Residues Met-1–Gly-21 form a helical membrane-spanning segment. The span at Glu-119–Ala-138 shows a compositional bias: polar residues. Disordered stretches follow at residues Glu-119–Thr-139 and Asp-168–Ala-191. Basic and acidic residues predominate over residues Pro-181 to Ala-191.

It belongs to the TatB family. In terms of assembly, the Tat system comprises two distinct complexes: a TatABC complex, containing multiple copies of TatA, TatB and TatC subunits, and a separate TatA complex, containing only TatA subunits. Substrates initially bind to the TatABC complex, which probably triggers association of the separate TatA complex to form the active translocon.

It is found in the cell inner membrane. Part of the twin-arginine translocation (Tat) system that transports large folded proteins containing a characteristic twin-arginine motif in their signal peptide across membranes. Together with TatC, TatB is part of a receptor directly interacting with Tat signal peptides. TatB may form an oligomeric binding site that transiently accommodates folded Tat precursor proteins before their translocation. This is Sec-independent protein translocase protein TatB from Pasteurella multocida (strain Pm70).